Reading from the N-terminus, the 272-residue chain is Phosphate import ATP-binding protein PstB 1 (272 aa).

An ABC transporter domain is found at 26–267 (LEIRNLDLRY…PKKRKTEDYI (242 aa)). Residue 58–65 (GPSGCGKS) participates in ATP binding.

The protein belongs to the ABC transporter superfamily. Phosphate importer (TC 3.A.1.7) family. The complex is composed of two ATP-binding proteins (PstB), two transmembrane proteins (PstC and PstA) and a solute-binding protein (PstS).

Its subcellular location is the cell inner membrane. The catalysed reaction is phosphate(out) + ATP + H2O = ADP + 2 phosphate(in) + H(+). Functionally, part of the ABC transporter complex PstSACB involved in phosphate import. Responsible for energy coupling to the transport system. In Shewanella oneidensis (strain ATCC 700550 / JCM 31522 / CIP 106686 / LMG 19005 / NCIMB 14063 / MR-1), this protein is Phosphate import ATP-binding protein PstB 1.